Consider the following 328-residue polypeptide: Opticin (328 aa).

The N-terminal stretch at 1–19 is a signal peptide; it reads MKFLAFLSLLSLVLQKAET. An N-linked (GlcNAc...) asparagine glycan is attached at N46. Y69 is subject to Sulfotyrosine. N-linked (GlcNAc...) asparagine glycosylation is found at N80 and N101. One can recognise an LRRNT domain in the interval 112–149; sequence LLNSQSSHGLPTCLVCVCLGSSVYCDDADLENIPPLPQ. 6 LRR repeats span residues 150–171, 174–195, 198–219, 244–265, 266–286, and 296–316; these read MTTYLYARFNHISHIQAGDFKG, KLRRIDLSGNSISSIHNDALRL, ALQDLILPENQLAALPVLPSGI, KLQFLYLANNMLDSIPGPLPLS, LRSLHLQNNMIETMESDTFCD, and QLEDIRLDGNPINLSLFPEAY. An intrachain disulfide couples C285 to C318. N-linked (GlcNAc...) asparagine glycosylation occurs at N308.

This sequence belongs to the small leucine-rich proteoglycan (SLRP) family. SLRP class III subfamily. Homodimer. In terms of processing, O-glycosylated. Sulfated on tyrosine residues. Post-translationally, proteolytically cleaved by MMP1, MMP2, MMP3, MMP7, MMP8, MMP9, ADAMTS4, and ADAMTS5. Proteolytically cleaved by MMP13. In terms of tissue distribution, expressed in cartilage (at protein level). Expressed in the vitreous collagen, inner limiting membrane, lens capsule, trabecular meshwork, anterior surface of the iris, the area adjacent to the nonpigmented ciliary epithelium, and weakly expressed in the retina of the eye (at protein level). Expressed in the nonpigmented ciliary epithelium of the eye.

The protein localises to the secreted. Its subcellular location is the extracellular space. The protein resides in the extracellular matrix. Inhibits angiogenesis in the vitreous humor of the eye, and therefore represses neovascularization. Binds collagen fibrils. May be involved in collagen fiber organization via regulation of other members of the small leucine-rich repeat proteoglycan superfamily. In Mus musculus (Mouse), this protein is Opticin (Optc).